A 252-amino-acid chain; its full sequence is Chitooligosaccharide deacetylase (252 aa).

Residues H61 and H125 each coordinate Mg(2+).

It belongs to the YdjC deacetylase family. ChbG subfamily. In terms of assembly, homodimer. The cofactor is Mg(2+).

The protein localises to the cytoplasm. It carries out the reaction N,N'-diacetylchitobiose + H2O = N-acetyl-beta-D-glucosaminyl-(1-&gt;4)-D-glucosamine + acetate. The enzyme catalyses diacetylchitobiose-6'-phosphate + H2O = N'-monoacetylchitobiose-6'-phosphate + acetate. The protein operates within glycan degradation; chitin degradation. Functionally, involved in the degradation of chitin. ChbG is essential for growth on the acetylated chitooligosaccharides chitobiose and chitotriose but is dispensable for growth on cellobiose and chitosan dimer, the deacetylated form of chitobiose. Deacetylation of chitobiose-6-P and chitotriose-6-P is necessary for both the activation of the chb promoter by the regulatory protein ChbR and the hydrolysis of phosphorylated beta-glucosides by the phospho-beta-glucosidase ChbF. Catalyzes the removal of only one acetyl group from chitobiose-6-P to yield monoacetylchitobiose-6-P, the inducer of ChbR and the substrate of ChbF. This chain is Chitooligosaccharide deacetylase, found in Salmonella dublin (strain CT_02021853).